A 96-amino-acid polypeptide reads, in one-letter code: CRISPR-associated endoribonuclease Cas2 (96 aa).

Asp8 provides a ligand contact to Mg(2+).

The protein belongs to the CRISPR-associated endoribonuclease Cas2 protein family. As to quaternary structure, homodimer, forms a heterotetramer with a Cas1 homodimer. It depends on Mg(2+) as a cofactor.

Functionally, CRISPR (clustered regularly interspaced short palindromic repeat), is an adaptive immune system that provides protection against mobile genetic elements (viruses, transposable elements and conjugative plasmids). CRISPR clusters contain sequences complementary to antecedent mobile elements and target invading nucleic acids. CRISPR clusters are transcribed and processed into CRISPR RNA (crRNA). Functions as a ssRNA-specific endoribonuclease. Involved in the integration of spacer DNA into the CRISPR cassette. The chain is CRISPR-associated endoribonuclease Cas2 from Chlorobaculum tepidum (strain ATCC 49652 / DSM 12025 / NBRC 103806 / TLS) (Chlorobium tepidum).